A 134-amino-acid polypeptide reads, in one-letter code: Interleukin-5 (134 aa).

An N-terminal signal peptide occupies residues Met1–Ala21. Asn76 and Asn90 each carry an N-linked (GlcNAc...) asparagine glycan.

The protein belongs to the IL-5 family. In terms of assembly, homodimer; disulfide-linked. Interacts with IL5RA. Interacts with CSF2RB.

It localises to the secreted. Homodimeric cytokine expressed predominantly by T-lymphocytes and NK cells that plays an important role in the survival, differentiation, and chemotaxis of eosinophils. Also acts on activated and resting B-cells to induce immunoglobulin production, growth, and differentiation. Mechanistically, exerts its biological effects through a receptor composed of IL5RA subunit and the cytokine receptor common subunit beta/CSF2RB. Binding to the receptor leads to activation of various kinases including LYN, SYK and JAK2 and thereby propagates signals through the RAS-MAPK and JAK-STAT5 pathways respectively. This Bos taurus (Bovine) protein is Interleukin-5 (IL5).